Here is a 101-residue protein sequence, read N- to C-terminus: Small ribosomal subunit protein uS14 (101 aa).

Basic and acidic residues predominate over residues 1–10; it reads MAKKSSIEKN. Residues 1–24 form a disordered region; sequence MAKKSSIEKNNRRKRLTKNAAPKR. Residues 11–24 are compositionally biased toward basic residues; the sequence is NRRKRLTKNAAPKR.

It belongs to the universal ribosomal protein uS14 family. Part of the 30S ribosomal subunit. Contacts proteins S3 and S10.

Its function is as follows. Binds 16S rRNA, required for the assembly of 30S particles and may also be responsible for determining the conformation of the 16S rRNA at the A site. The sequence is that of Small ribosomal subunit protein uS14 from Rhodopseudomonas palustris (strain BisB18).